Consider the following 202-residue polypeptide: MADVTPSRTGQVSRKTNETAVSVALDVEGTGSSKIVTGVGFFDHMLDQLSRHSLIDMDIKAEGDLHVDDHHTVEDTGIAIGQALAKALGDRRGITRYASIDLAMDETMTRAAVDVSGRPFLVWNVAFTAPKIGTFDTELVREFFQALAQHAGITLHVQNIYGANNHHIAETCFKSVARVLRTATEIDPRQAGRVPSTKGTLA.

It belongs to the imidazoleglycerol-phosphate dehydratase family.

Its subcellular location is the cytoplasm. The enzyme catalyses D-erythro-1-(imidazol-4-yl)glycerol 3-phosphate = 3-(imidazol-4-yl)-2-oxopropyl phosphate + H2O. Its pathway is amino-acid biosynthesis; L-histidine biosynthesis; L-histidine from 5-phospho-alpha-D-ribose 1-diphosphate: step 6/9. This is Imidazoleglycerol-phosphate dehydratase from Sinorhizobium medicae (strain WSM419) (Ensifer medicae).